Here is a 307-residue protein sequence, read N- to C-terminus: Ribosomal RNA small subunit methyltransferase H (307 aa).

S-adenosyl-L-methionine contacts are provided by residues 32 to 34 (GGH), Asp52, Phe78, Asp100, and Gln107.

Belongs to the methyltransferase superfamily. RsmH family.

It localises to the cytoplasm. It carries out the reaction cytidine(1402) in 16S rRNA + S-adenosyl-L-methionine = N(4)-methylcytidine(1402) in 16S rRNA + S-adenosyl-L-homocysteine + H(+). Specifically methylates the N4 position of cytidine in position 1402 (C1402) of 16S rRNA. In Coxiella burnetii (strain CbuG_Q212) (Coxiella burnetii (strain Q212)), this protein is Ribosomal RNA small subunit methyltransferase H.